The sequence spans 1380 residues: Carboxypeptidase D (1380 aa).

Residues 1-31 (MASGRDERPPWRLGRLLLLMCLLLLGSSARA) form the signal peptide. The Extracellular portion of the chain corresponds to 32-1299 (AHIKKAEATT…DNRIFGLPRE (1268 aa)). In terms of domain architecture, Peptidase M14 1 spans 57–380 (RYYHEEELES…ESLITLIEKV (324 aa)). Residues His-139 and Glu-142 each contribute to the Zn(2+) site. Positions 162-164 (RGD) match the Cell attachment site motif. Asn-172 carries N-linked (GlcNAc...) asparagine glycosylation. The segment at 190–232 (AREGDCGFGDGGPSGASGRDNSRGRDLNRSFPDQFSTGEPPAL) is disordered. The segment covering 195 to 204 (CGFGDGGPSG) has biased composition (gly residues). The N-linked (GlcNAc...) asparagine glycan is linked to Asn-217. Residue His-257 participates in Zn(2+) binding. Phosphotyrosine is present on Tyr-265. Ser-270 carries the post-translational modification Phosphoserine. The Proton donor/acceptor role is filled by Glu-350. Residues Asn-399, Asn-410, Asn-429, and Asn-522 are each glycosylated (N-linked (GlcNAc...) asparagine). The 291-residue stretch at 502–792 (HHHHFPDMEI…RSLIQFMKQV (291 aa)) folds into the Peptidase M14 2 domain. Zn(2+) is bound by residues His-564 and Glu-567. A glycan (N-linked (GlcNAc...) asparagine) is linked at Asn-626. Residue His-671 participates in Zn(2+) binding. Glu-762 serves as the catalytic Proton donor/acceptor. Asn-811, Asn-855, Asn-867, and Asn-879 each carry an N-linked (GlcNAc...) asparagine glycan. A disordered region spans residues 874-899 (STDSNNESKKGKGASSSTNDASDPTT). Over residues 887 to 897 (ASSSTNDASDP) the composition is skewed to polar residues. The region spanning 932-1211 (RYHSYKDLSE…RSLLSMLVEV (280 aa)) is the Peptidase M14 3 domain. 4 N-linked (GlcNAc...) asparagine glycosylation sites follow: Asn-955, Asn-978, Asn-1070, and Asn-1142. A helical membrane pass occupies residues 1300–1320 (LVVTVSGATMSALILTACIIW). 3 S-palmitoyl cysteine lipidation sites follow: Cys-1317, Cys-1321, and Cys-1323. Over 1321–1380 (CICSIKSNRHKDGFHRLRQHHDEYEDEIRMMSTGSKKSLLSHEFQDETDTEEETLYSSKH) the chain is Cytoplasmic. Ser-1358 and Ser-1361 each carry phosphoserine. The tract at residues 1359–1380 (LLSHEFQDETDTEEETLYSSKH) is disordered. A phosphothreonine mark is found at Thr-1368 and Thr-1370.

This sequence belongs to the peptidase M14 family. Zn(2+) is required as a cofactor. Highly expressed in placenta, pancreas and hepatoma cells. Lower levels found in skeletal muscle, heart and colon carcinoma and melanoma cell lines.

The protein resides in the cell membrane. It carries out the reaction Releases C-terminal Arg and Lys from polypeptides.. The sequence is that of Carboxypeptidase D (CPD) from Homo sapiens (Human).